A 292-amino-acid chain; its full sequence is UTP--glucose-1-phosphate uridylyltransferase (292 aa).

Belongs to the UDPGP type 2 family.

The catalysed reaction is alpha-D-glucose 1-phosphate + UTP + H(+) = UDP-alpha-D-glucose + diphosphate. Its function is as follows. May play a role in stationary phase survival. The chain is UTP--glucose-1-phosphate uridylyltransferase (galU) from Mycoplasma genitalium (strain ATCC 33530 / DSM 19775 / NCTC 10195 / G37) (Mycoplasmoides genitalium).